A 354-amino-acid chain; its full sequence is Uroporphyrinogen decarboxylase (354 aa).

Residues 27-31 (RQAGR), aspartate 77, tyrosine 154, serine 209, and histidine 327 each bind substrate.

Belongs to the uroporphyrinogen decarboxylase family. As to quaternary structure, homodimer.

It localises to the cytoplasm. It carries out the reaction uroporphyrinogen III + 4 H(+) = coproporphyrinogen III + 4 CO2. It participates in porphyrin-containing compound metabolism; protoporphyrin-IX biosynthesis; coproporphyrinogen-III from 5-aminolevulinate: step 4/4. Its function is as follows. Catalyzes the decarboxylation of four acetate groups of uroporphyrinogen-III to yield coproporphyrinogen-III. In Pseudomonas syringae pv. syringae (strain B728a), this protein is Uroporphyrinogen decarboxylase.